Consider the following 385-residue polypeptide: 1-deoxy-D-xylulose 5-phosphate reductoisomerase (385 aa).

NADPH is bound by residues threonine 10, glycine 11, serine 12, isoleucine 13, lysine 37, and asparagine 124. A 1-deoxy-D-xylulose 5-phosphate-binding site is contributed by lysine 125. An NADPH-binding site is contributed by glutamate 126. Residue aspartate 150 coordinates Mn(2+). Residues serine 151, glutamate 152, serine 176, and histidine 199 each coordinate 1-deoxy-D-xylulose 5-phosphate. Glutamate 152 serves as a coordination point for Mn(2+). Glycine 205 contacts NADPH. The 1-deoxy-D-xylulose 5-phosphate site is built by serine 212, asparagine 217, lysine 218, and glutamate 221. Glutamate 221 lines the Mn(2+) pocket.

This sequence belongs to the DXR family. The cofactor is Mg(2+). Mn(2+) serves as cofactor.

It carries out the reaction 2-C-methyl-D-erythritol 4-phosphate + NADP(+) = 1-deoxy-D-xylulose 5-phosphate + NADPH + H(+). The protein operates within isoprenoid biosynthesis; isopentenyl diphosphate biosynthesis via DXP pathway; isopentenyl diphosphate from 1-deoxy-D-xylulose 5-phosphate: step 1/6. In terms of biological role, catalyzes the NADPH-dependent rearrangement and reduction of 1-deoxy-D-xylulose-5-phosphate (DXP) to 2-C-methyl-D-erythritol 4-phosphate (MEP). The protein is 1-deoxy-D-xylulose 5-phosphate reductoisomerase of Clostridium botulinum (strain Kyoto / Type A2).